The sequence spans 422 residues: UDP-N-acetylglucosamine 1-carboxyvinyltransferase (422 aa).

22–23 contacts phosphoenolpyruvate; the sequence is KN. R95 provides a ligand contact to UDP-N-acetyl-alpha-D-glucosamine. The active-site Proton donor is C119. 2-(S-cysteinyl)pyruvic acid O-phosphothioketal is present on C119. UDP-N-acetyl-alpha-D-glucosamine contacts are provided by residues 124-128, D309, and V331; that span reads RPIDQ.

It belongs to the EPSP synthase family. MurA subfamily.

It localises to the cytoplasm. The catalysed reaction is phosphoenolpyruvate + UDP-N-acetyl-alpha-D-glucosamine = UDP-N-acetyl-3-O-(1-carboxyvinyl)-alpha-D-glucosamine + phosphate. Its pathway is cell wall biogenesis; peptidoglycan biosynthesis. Functionally, cell wall formation. Adds enolpyruvyl to UDP-N-acetylglucosamine. In Anaeromyxobacter sp. (strain Fw109-5), this protein is UDP-N-acetylglucosamine 1-carboxyvinyltransferase.